We begin with the raw amino-acid sequence, 261 residues long: Lys-63-specific deubiquitinase BRCC36 (261 aa).

The 144-residue stretch at 6–149 folds into the MPN domain; that stretch reads VHIQGDAFLV…YTCFQSVQAQ (144 aa). The Zn(2+) site is built by histidine 92, histidine 94, and aspartate 105. The JAMM motif signature appears at 92-105; it reads HSHPHITVWPSHVD.

It belongs to the peptidase M67A family. BRCC36 subfamily. In terms of assembly, component of the BRCA1-A complex, at least composed of brca1, bard1, uimc1/rap80, abraxas1, brcc3/brcc36, babam2 and babam1/nba1. In the BRCA1-A complex, interacts directly with ABRAXAS1 and babam2. Component of the BRISC complex, at least composed of ABRAXAS2, brcc3/brcc36, babam2 and babam1/nba1. Within the complex, interacts directly with abraxas2. Both the BRCA1-A complex and the BRISC complex bind polyubiquitin. It depends on Zn(2+) as a cofactor.

It is found in the nucleus. Its subcellular location is the cytoplasm. The protein resides in the cytoskeleton. It localises to the spindle pole. Its function is as follows. Metalloprotease that specifically cleaves 'Lys-63'-linked polyubiquitin chains. Does not have activity toward 'Lys-48'-linked polyubiquitin chains. Component of the BRCA1-A complex, a complex that specifically recognizes 'Lys-63'-linked ubiquitinated histones H2A and H2AX at DNA lesions sites, leading to target the brca1-bard1 heterodimer to sites of DNA damage at double-strand breaks (DSBs). In the BRCA1-A complex, it specifically removes 'Lys-63'-linked ubiquitin on histones H2A and H2AX, antagonizing the rnf8-dependent ubiquitination at double-strand breaks (DSBs). Catalytic subunit of the BRISC complex, a multiprotein complex that specifically cleaves 'Lys-63'-linked ubiquitin in various substrates. Mediates the specific 'Lys-63'-specific deubiquitination associated with the COP9 signalosome complex (CSN), via the interaction of the BRISC complex with the CSN complex. The BRISC complex is required for normal mitotic spindle assembly and microtubule attachment to kinetochores via its role in deubiquitinating numa1. Plays a role in interferon signaling via its role in the deubiquitination of the interferon receptor ifnar1; deubiquitination increases ifnar1 activity by enhancing its stability and cell surface expression. Acts as a regulator of the NLRP3 inflammasome by mediating deubiquitination of nlrp3. Down-regulates the response to bacterial lipopolysaccharide (LPS) via its role in ifnar1 deubiquitination. The polypeptide is Lys-63-specific deubiquitinase BRCC36 (brcc3) (Xenopus laevis (African clawed frog)).